Consider the following 145-residue polypeptide: Large ribosomal subunit protein uL15 (145 aa).

The segment at 1–55 is disordered; it reads MSLLKTLAPKAGSKHAPKRIGRGIGSGMGGTATKGHKGQLARTGGTVRRGFEGGQ. Positions 12–21 are enriched in basic residues; that stretch reads GSKHAPKRIG. A compositionally biased stretch (gly residues) spans 22-32; it reads RGIGSGMGGTA.

The protein belongs to the universal ribosomal protein uL15 family. As to quaternary structure, part of the 50S ribosomal subunit.

In terms of biological role, binds to the 23S rRNA. The sequence is that of Large ribosomal subunit protein uL15 from Bdellovibrio bacteriovorus (strain ATCC 15356 / DSM 50701 / NCIMB 9529 / HD100).